Reading from the N-terminus, the 259-residue chain is Methionine aminopeptidase (259 aa).

H78 contacts substrate. Residues D95, D106, and H169 each contribute to the a divalent metal cation site. H176 contributes to the substrate binding site. Position 202 (E202) interacts with a divalent metal cation. W220 is a binding site for substrate. Residue E234 participates in a divalent metal cation binding.

This sequence belongs to the peptidase M24A family. Methionine aminopeptidase type 1 subfamily. Monomer. Requires Co(2+) as cofactor. Zn(2+) serves as cofactor. The cofactor is Mn(2+). It depends on Fe(2+) as a cofactor.

It carries out the reaction Release of N-terminal amino acids, preferentially methionine, from peptides and arylamides.. Removes the N-terminal methionine from nascent proteins. The N-terminal methionine is often cleaved when the second residue in the primary sequence is small and uncharged (Met-Ala-, Cys, Gly, Pro, Ser, Thr, or Val). Requires deformylation of the N(alpha)-formylated initiator methionine before it can be hydrolyzed. In Rickettsia prowazekii (strain Madrid E), this protein is Methionine aminopeptidase.